A 325-amino-acid polypeptide reads, in one-letter code: Probable pectate lyase B (325 aa).

An N-terminal signal peptide occupies residues 1–15 (MRLPTLFMLAAIATA). Residues Asp-132, Asp-161, and Asp-165 each contribute to the Ca(2+) site. The active site involves Arg-218.

This sequence belongs to the polysaccharide lyase 1 family. Ca(2+) serves as cofactor.

The protein localises to the secreted. The enzyme catalyses Eliminative cleavage of (1-&gt;4)-alpha-D-galacturonan to give oligosaccharides with 4-deoxy-alpha-D-galact-4-enuronosyl groups at their non-reducing ends.. Functionally, pectinolytic enzyme consist of four classes of enzymes: pectin lyase, polygalacturonase, pectin methylesterase and rhamnogalacturonase. Among pectinolytic enzymes, pectin lyase is the most important in depolymerization of pectin, since it cleaves internal glycosidic bonds of highly methylated pectins. Favors pectate, the anion, over pectin, the methyl ester. The polypeptide is Probable pectate lyase B (plyB) (Aspergillus terreus (strain NIH 2624 / FGSC A1156)).